The chain runs to 116 residues: Protein Wnt-5(I) (116 aa).

S1 carries the O-palmitoleoyl serine; by PORCN lipid modification. N-linked (GlcNAc...) asparagine glycosylation occurs at N69. A disulfide bridge links C82 with C97.

It belongs to the Wnt family. Post-translationally, palmitoleoylation is required for efficient binding to frizzled receptors. Depalmitoleoylation leads to Wnt signaling pathway inhibition.

It localises to the secreted. The protein localises to the extracellular space. It is found in the extracellular matrix. Functionally, ligand for members of the frizzled family of seven transmembrane receptors. Probable developmental protein. May be a signaling molecule which affects the development of discrete regions of tissues. Is likely to signal over only few cell diameters. This Eptatretus stoutii (Pacific hagfish) protein is Protein Wnt-5(I) (WNT-5(I)).